The sequence spans 247 residues: PF03932 family protein CutC (247 aa).

This sequence belongs to the CutC family.

Its subcellular location is the cytoplasm. This is PF03932 family protein CutC from Klebsiella pneumoniae (strain 342).